The following is a 297-amino-acid chain: MSSAHFNRGPAYGLSAEVKNKLAQKYDHQREQELREWIEGVTGRRIGNNFMDGLKDGIILCEFINKLQPGSVKKVNESTQNWHQLENIGNFIKAITKYGVKPHDIFEANDLFENTNHTQVQSTLLALASMAKTKGNKVNVGVKYAEKQERKFEPEKLREGRNIIGLQMGTNKFASQQGMTAYGTRRHLYDPKLGTDQPLDQATISLQMGTNKGASQAGMTAPGTKRQIFEPGLGMEHCDTLNVSLQMGSNKGASQRGMTVYGLPRQVYDPKYCLTPEYPELGEPAHNHHPHNYYNSA.

One can recognise a Calponin-homology (CH) domain in the interval 28–131 (HQREQELREW…STLLALASMA (104 aa)). Calponin-like repeat units lie at residues 164 to 189 (IGLQ…RHLY), 204 to 229 (ISLQ…RQIF), and 243 to 268 (VSLQ…RQVY). Thr-170 is modified (phosphothreonine; by ROCK2). Phosphoserine; by ROCK2 is present on Ser-175. A phosphothreonine; by ROCK2 mark is found at Thr-180 and Thr-184. Thr-259 is modified (phosphothreonine; by ROCK2).

This sequence belongs to the calponin family. Part of cGMP kinase signaling complex at least composed of ACTA2/alpha-actin, CNN1/calponin H1, PLN/phospholamban, PRKG1 and ITPR1.

In terms of biological role, thin filament-associated protein that is implicated in the regulation and modulation of smooth muscle contraction. It is capable of binding to actin, calmodulin and tropomyosin. The interaction of calponin with actin inhibits the actomyosin Mg-ATPase activity. In Ovis aries (Sheep), this protein is Calponin-1 (CNN1).